We begin with the raw amino-acid sequence, 2319 residues long: A-kinase anchor protein 6 (2319 aa).

Composition is skewed to polar residues over residues 1-12 and 324-339; these read MLTMSVTLSPLR and GVSSSSGEALTNAAQP. Disordered stretches follow at residues 1 to 24, 301 to 369, 493 to 532, 566 to 614, and 691 to 757; these read MLTMSVTLSPLRSQDLDPMATDAS, VDDK…NATP, SRLKKPHKTSEEVPPCRTPKRGTGSGKQAKNTKSSAVPNG, LQLQ…PSHV, and TRLG…SATK. Low complexity predominate over residues 340 to 351; the sequence is SSETVQQESSSS. 2 stretches are compositionally biased toward polar residues: residues 518-532 and 566-591; these read GKQAKNTKSSAVPNG and LQLQSETSSSPAFTQSSESSVGSDNI. Low complexity predominate over residues 697–711; it reads SPSSSSDIASSLGES. Residues 735-754 are compositionally biased toward basic and acidic residues; that stretch reads KYADEKSERASSSEKNESHS. Spectrin repeat units follow at residues 762–848 and 1036–1150; these read QKLM…QLLE and EKVD…LLDD. The residue at position 1073 (Ser1073) is a Phosphoserine. The interval 1250–1272 is disordered; sequence KLGETSNEDPGYDEEADNHGGSQ. Residues 1255-1265 are compositionally biased toward acidic residues; that stretch reads SNEDPGYDEEA. A phosphoserine mark is found at Ser1570 and Ser1595. Disordered regions lie at residues 1821–1842, 1900–1925, and 1963–1983; these read VSDEMKGSKDISSSEMTNPSDT, EGIPERQKGKPNVTSKVSENLGSHGK, and KCPNHHHFENQSTASTPTEKS. Composition is skewed to polar residues over residues 1830 to 1842, 1911 to 1920, and 1972 to 1982; these read DISSSEMTNPSDT, NVTSKVSENL, and NQSTASTPTEK. The interval 2063–2076 is PKA-RII subunit binding domain; the sequence is IIDMASTALKSKSQ. Residues 2198 to 2215 are compositionally biased toward low complexity; it reads FSDSSLSADDADTVALSS. Positions 2198–2319 are disordered; that stretch reads FSDSSLSADD…HEKRHRNMHR (122 aa).

In terms of assembly, interacts with RII subunit of PKA, phosphatase 2B (calcineurin) and AKAP79. Interacts with SYNPO2. In terms of tissue distribution, highly expressed in cardiac and skeletal muscle, followed by brain.

Its subcellular location is the sarcoplasmic reticulum. It localises to the nucleus membrane. Functionally, binds to type II regulatory subunits of protein kinase A and anchors/targets them to the nuclear membrane or sarcoplasmic reticulum. May act as an adapter for assembling multiprotein complexes. The chain is A-kinase anchor protein 6 (AKAP6) from Homo sapiens (Human).